The following is a 199-amino-acid chain: Peptidyl-tRNA hydrolase (199 aa).

Tyr-18 is a binding site for tRNA. His-23 (proton acceptor) is an active-site residue. 3 residues coordinate tRNA: Tyr-72, Asn-74, and Asn-120.

This sequence belongs to the PTH family. In terms of assembly, monomer.

It localises to the cytoplasm. The catalysed reaction is an N-acyl-L-alpha-aminoacyl-tRNA + H2O = an N-acyl-L-amino acid + a tRNA + H(+). Functionally, hydrolyzes ribosome-free peptidyl-tRNAs (with 1 or more amino acids incorporated), which drop off the ribosome during protein synthesis, or as a result of ribosome stalling. In terms of biological role, catalyzes the release of premature peptidyl moieties from peptidyl-tRNA molecules trapped in stalled 50S ribosomal subunits, and thus maintains levels of free tRNAs and 50S ribosomes. The polypeptide is Peptidyl-tRNA hydrolase (Bifidobacterium longum (strain DJO10A)).